An 89-amino-acid polypeptide reads, in one-letter code: Small ribosomal subunit protein uS15 (89 aa).

This sequence belongs to the universal ribosomal protein uS15 family. In terms of assembly, part of the 30S ribosomal subunit. Forms a bridge to the 50S subunit in the 70S ribosome, contacting the 23S rRNA.

In terms of biological role, one of the primary rRNA binding proteins, it binds directly to 16S rRNA where it helps nucleate assembly of the platform of the 30S subunit by binding and bridging several RNA helices of the 16S rRNA. Forms an intersubunit bridge (bridge B4) with the 23S rRNA of the 50S subunit in the ribosome. This Methylobacterium nodulans (strain LMG 21967 / CNCM I-2342 / ORS 2060) protein is Small ribosomal subunit protein uS15.